A 116-amino-acid chain; its full sequence is MAAEGPVAKRLISVILRYNYGMNPLGSLSSAKKRGHVSKIESLPGLSSRANLRRRTTRCRPERRRFYSGTVNRNARSAGAASRSTSSVKRPLESKKRNARPETEKWCASYSAGNRR.

Residues 64–116 are disordered; that stretch reads RRFYSGTVNRNARSAGAASRSTSSVKRPLESKKRNARPETEKWCASYSAGNRR. Residues 73–87 show a composition bias toward low complexity; it reads RNARSAGAASRSTSS. Residues 90–105 are compositionally biased toward basic and acidic residues; it reads RPLESKKRNARPETEK.

This is an uncharacterized protein from Saccharomyces cerevisiae (strain ATCC 204508 / S288c) (Baker's yeast).